The primary structure comprises 137 residues: Holo-[acyl-carrier-protein] synthase (137 aa).

The Mg(2+) site is built by Asp-7 and Glu-58.

The protein belongs to the P-Pant transferase superfamily. AcpS family. Mg(2+) is required as a cofactor.

The protein resides in the cytoplasm. It carries out the reaction apo-[ACP] + CoA = holo-[ACP] + adenosine 3',5'-bisphosphate + H(+). Functionally, transfers the 4'-phosphopantetheine moiety from coenzyme A to a Ser of acyl-carrier-protein. This chain is Holo-[acyl-carrier-protein] synthase, found in Chloroflexus aurantiacus (strain ATCC 29366 / DSM 635 / J-10-fl).